Reading from the N-terminus, the 365-residue chain is UDP-N-acetylglucosamine--N-acetylmuramyl-(pentapeptide) pyrophosphoryl-undecaprenol N-acetylglucosamine transferase (365 aa).

UDP-N-acetyl-alpha-D-glucosamine is bound by residues 10–12 (TGG), asparagine 128, arginine 170, serine 199, isoleucine 250, and glutamine 295.

The protein belongs to the glycosyltransferase 28 family. MurG subfamily.

It localises to the cell inner membrane. The enzyme catalyses di-trans,octa-cis-undecaprenyl diphospho-N-acetyl-alpha-D-muramoyl-L-alanyl-D-glutamyl-meso-2,6-diaminopimeloyl-D-alanyl-D-alanine + UDP-N-acetyl-alpha-D-glucosamine = di-trans,octa-cis-undecaprenyl diphospho-[N-acetyl-alpha-D-glucosaminyl-(1-&gt;4)]-N-acetyl-alpha-D-muramoyl-L-alanyl-D-glutamyl-meso-2,6-diaminopimeloyl-D-alanyl-D-alanine + UDP + H(+). It participates in cell wall biogenesis; peptidoglycan biosynthesis. Its function is as follows. Cell wall formation. Catalyzes the transfer of a GlcNAc subunit on undecaprenyl-pyrophosphoryl-MurNAc-pentapeptide (lipid intermediate I) to form undecaprenyl-pyrophosphoryl-MurNAc-(pentapeptide)GlcNAc (lipid intermediate II). The protein is UDP-N-acetylglucosamine--N-acetylmuramyl-(pentapeptide) pyrophosphoryl-undecaprenol N-acetylglucosamine transferase of Prosthecochloris aestuarii (strain DSM 271 / SK 413).